We begin with the raw amino-acid sequence, 244 residues long: Flavin-dependent thymidylate synthase (244 aa).

Residues 2 to 207 (VRVTLVNYTR…ELRPIIKWAK (206 aa)) form the ThyX domain. FAD contacts are provided by residues serine 56, 80–82 (RHR), and glutamine 88. Residues 77 to 80 (QLVR), 88 to 92 (QQSQR), and arginine 146 contribute to the dUMP site. The short motif at 80–90 (RHRIASYTQQS) is the ThyX motif element. Residues 162–164 (NLR) and histidine 168 each bind FAD. Arginine 173 serves as a coordination point for dUMP. The Involved in ionization of N3 of dUMP, leading to its activation role is filled by arginine 173.

The protein belongs to the thymidylate synthase ThyX family. In terms of assembly, homotetramer. The cofactor is FAD.

The catalysed reaction is dUMP + (6R)-5,10-methylene-5,6,7,8-tetrahydrofolate + NADPH + H(+) = dTMP + (6S)-5,6,7,8-tetrahydrofolate + NADP(+). Its pathway is pyrimidine metabolism; dTTP biosynthesis. Catalyzes the reductive methylation of 2'-deoxyuridine-5'-monophosphate (dUMP) to 2'-deoxythymidine-5'-monophosphate (dTMP) while utilizing 5,10-methylenetetrahydrofolate (mTHF) as the methyl donor, and NADPH and FADH(2) as the reductant. The protein is Flavin-dependent thymidylate synthase of Pyrococcus abyssi (strain GE5 / Orsay).